Consider the following 772-residue polypeptide: MSFVVGFDFGTKNCTIAVAQKGGVDVIANEVSNRLTPSMVSFGEKERYLGESALTNQLRNIRNTITNIKRFIGQEFKTDTVQEELKHEMFQSYEMDNGFVGYNVTYAGEQCSFSSEAILGMLFGKLKKTTEAFVNNPVRDVVISVPVFWNDYQRRAILNAGSIAGLNIIRLINETTATALSYGIYKEWSETDPTNVLFVDVGDSATSVSAVQYKKGQLKVLGTASNPNIGSRVFDETLVKHFAKEFQTKYKINVFENKKALIRLRQACEKVKKILSSNNEAPVSIDSLMDDKDVKGMIDRATFEELANDDMNTIVEPLQRLLSELQMTPDQFQSIEITGGGTRSTSLQKKLSEVLGRDLSKTINSEESVCRGAALQCAMLSPVFRVRPFAVNDVASYPVSVHFKSVSGVEQKLDLFNLKSAIPTPKPLRISFPVTKAEGFEIVVNSTFGTIATVKVDNIPAFTNKSSIKAKVWLDIHGIFHIDEVKLVEQIPEEETAAPAETPAETPANGEAAKPAEEKKVKVKETSLVFTTSRKGLTNELLKAAIEEEGRMQASDLLAIETAEKKNALESYIYDMRSKLQSSLKEYVTPADAETFMTQLNKQMDWLESEEGEDQTKSVYAGKLEELRRLGNPIQKRKQDLEDYPDAVQTLKNIASYVKNEAMIPGERYDHIEKEEKEKLCKDCDDAVEWIDALVAKQQATPKTQPCIINTTEVLAKKTQLEVTAKMILGKPKPKPVEVPKEEPKDTPMESKDAPAEEPVATKDQKMDDILD.

Disordered regions lie at residues Thr496–Lys519 and Leu729–Asp772. The segment covering Ala497–Ala513 has biased composition (low complexity). Basic and acidic residues predominate over residues Lys735–Asp772.

It belongs to the heat shock protein 70 family.

Functionally, may function in protein folding and assembly, and disassembly of protein complexes. The chain is Heat shock protein 88 (hspH) from Dictyostelium discoideum (Social amoeba).